The sequence spans 229 residues: GTP:AMP phosphotransferase (229 aa).

10–15 (GVGKGT) contacts a ribonucleoside 5'-triphosphate. The segment at 30–59 (NVGNILRNEIKKESNIGKEVQNVVRSGNLV) is NMP. AMP is bound by residues Arg36, 57–59 (NLV), Gly87, 87–90 (GFPR), and Gln94. The interval 123–170 (GRRICNICDKNFNVSNIQQDSFDMPPILPSKDCIQCNGHTNLIKRKDD) is LID. Position 178 (Arg178) interacts with AMP.

The protein belongs to the adenylate kinase family.

The protein resides in the mitochondrion. The catalysed reaction is a ribonucleoside 5'-triphosphate + AMP = a ribonucleoside 5'-diphosphate + ADP. It catalyses the reaction GTP + AMP = GDP + ADP. Inhibited by the dinucleoside pentaphosphate compound P1,P5-di(guanosine-5') pentaphosphate (GP5A). Catalyzes the reversible transfer of the terminal phosphate group between GTP and AMP. Has very low activity with UTP, ITP, CTP and IMP and no activity with ATP, GMP, CMP and UMP in vitro. The sequence is that of GTP:AMP phosphotransferase from Plasmodium falciparum (isolate 3D7).